Consider the following 121-residue polypeptide: Trypsin/alpha-amylase inhibitor CMX1/CMX3 (121 aa).

Residues 1–24 form the signal peptide; that stretch reads MAFKHQLILSTAILLAVLAAASAS.

It belongs to the protease inhibitor I6 (cereal trypsin/alpha-amylase inhibitor) family.

The protein localises to the secreted. This is Trypsin/alpha-amylase inhibitor CMX1/CMX3 from Triticum aestivum (Wheat).